A 455-amino-acid polypeptide reads, in one-letter code: Probable Xaa-Pro aminopeptidase GSTUM_00008071001 (455 aa).

Aspartate 251, aspartate 262, glutamate 386, and glutamate 426 together coordinate Mn(2+).

It belongs to the peptidase M24B family. Mn(2+) is required as a cofactor.

The catalysed reaction is Release of any N-terminal amino acid, including proline, that is linked to proline, even from a dipeptide or tripeptide.. Its function is as follows. Catalyzes the removal of a penultimate prolyl residue from the N-termini of peptides. The protein is Probable Xaa-Pro aminopeptidase GSTUM_00008071001 of Tuber melanosporum (strain Mel28) (Perigord black truffle).